The sequence spans 331 residues: Type 2 lactosamine alpha-2,3-sialyltransferase (331 aa).

The Cytoplasmic portion of the chain corresponds to 1 to 4 (MKGY). A helical; Signal-anchor for type II membrane protein membrane pass occupies residues 5–25 (VVAIFLSSIFLYYVLYCILWG). Residues 26-331 (TNGYWFPNEE…KKMVINLTQN (306 aa)) lie on the Lumenal side of the membrane. 5 N-linked (GlcNAc...) asparagine glycosylation sites follow: asparagine 129, asparagine 181, asparagine 295, asparagine 308, and asparagine 327.

It belongs to the glycosyltransferase 29 family.

Its subcellular location is the golgi apparatus membrane. It catalyses the reaction a neolactoside nLc4Cer(d18:1(4E)) + CMP-N-acetyl-beta-neuraminate = a neolactoside IV(3)-alpha-NeuAc-nLc4Cer(d18:1(4E)) + CMP + H(+). It carries out the reaction a beta-D-galactosyl-(1-&gt;4)-N-acetyl-beta-D-glucosaminyl derivative + CMP-N-acetyl-beta-neuraminate = an N-acetyl-alpha-neuraminyl-(2-&gt;3)-beta-D-galactosyl-(1-&gt;4)-N-acetyl-beta-D-glucosaminyl derivative + CMP + H(+). The enzyme catalyses a neolactoside nLc6Cer(d18:1(4E)) + CMP-N-acetyl-beta-neuraminate = a neolactoside VI(3)-alpha-NeuNAc-nLc6Cer(d18:1(4E)) + CMP + H(+). Functionally, transfers the sialyl residue from CMP-N-acetyl-beta-neuraminate to the terminal galactose residue on sugar chains of glycoproteins and glycolipids. It's alpha-2,3-sialyltransferase activity is specific toward type II glycan chains (Galbeta1-4GlcNAc) on glycoproteins and glycolipids such as neolactosides nLc4Cer and nLc6Cer, whose sialyl-products serve as precursors for the Lewis X antigen. Critically involved in the synthesis of functional selectin ligands needed for neutrophil recruitment during inflammation and lymphocyte homing to the lymph nodes. This Rattus norvegicus (Rat) protein is Type 2 lactosamine alpha-2,3-sialyltransferase (St3gal6).